Reading from the N-terminus, the 535-residue chain is MATLSDGLFDDMSVLGVIGYVLEQTRFIFLVPILKRLVNLCQVVSVLLFVDAAYMAIVVAIVKLLGRTPQKVLKWESFKSDDIELAPSSNHPMVLIQIPIFNEKEVCQLSIGAACKLSWPLDRMIIQVLDDSTEEESQKLVRLECKKWESEGITIKSEVRGGFREGFKAGALTAGMKHSYVDEYKCEFVVIFDADFQPEPDFLERTVPFLVHNPEIALVQAGWKYGNADECCMTRIQEMSLNYHFAVEQKSGSSILGFFGFNGTAGVWRIKALNEAEGWKDRTIVEDMDLAVRAYLRGSKFVYVDDVKVKNELPSSFQAYRFQQHRWSCGPANLFKKIAMEIIKNQNVSLWKKVYLIYNFFFLRKIVVHIFTFVFYCVILPATVIFPEIEVPKWTTIYIPATITILNAIATPKSFYLILYWILFENVMAMHRSIGTLIGLLETSRVKEWIVTQKLGESNNLRENLIFPDHYSFPERLRWREIMVGMYLFICGYYDFVFGRTYLYVYLFLQSIAFFVVGVGYVGMPVPSTPVQTSE.

The helical transmembrane segment at 42–62 (QVVSVLLFVDAAYMAIVVAIV) threads the bilayer. Residue D131 is part of the active site. Positions 193 and 195 each coordinate substrate. D287 is a catalytic residue. A run of 4 helical transmembrane segments spans residues 366 to 386 (IVVH…TVIF), 403 to 423 (ITIL…YWIL), 482 to 502 (IMVG…GRTY), and 503 to 523 (LYVY…GYVG).

This sequence belongs to the glycosyltransferase 2 family. Plant cellulose synthase-like A subfamily.

It localises to the golgi apparatus membrane. The catalysed reaction is GDP-mannose + (glucomannan)n = GDP + (glucomannan)n+1.. Functionally, probable mannan synthase which consists of a 4-beta-mannosyltransferase activity on mannan using GDP-mannose. The beta-1,4-mannan product is the backbone for galactomannan synthesis by galactomannan galactosyltransferase. Galactomannan is a noncellulosic polysaccharides of plant cell wall. In Arabidopsis thaliana (Mouse-ear cress), this protein is Probable glucomannan 4-beta-mannosyltransferase 14.